Consider the following 450-residue polypeptide: Saccharopine dehydrogenase [NADP(+), L-glutamate-forming] (450 aa).

Residues 9–12, 32–34, 54–55, Ile75, 97–98, 124–126, and Ser174 each bind NADP(+); these read SGFV, CRT, DV, TS, and VDP. Residues 98 to 99 and Asp125 contribute to the L-saccharopine site; that span reads SY. L-saccharopine contacts are provided by residues Arg223 and 244 to 246; that span reads TLR.

The protein belongs to the saccharopine dehydrogenase family. As to quaternary structure, homodimer.

The protein resides in the cytoplasm. The catalysed reaction is L-saccharopine + NADP(+) + H2O = (S)-2-amino-6-oxohexanoate + L-glutamate + NADPH + H(+). The protein operates within amino-acid biosynthesis; L-lysine biosynthesis via AAA pathway; L-lysine from L-alpha-aminoadipate (fungal route): step 2/3. This is Saccharopine dehydrogenase [NADP(+), L-glutamate-forming] from Schizosaccharomyces pombe (strain 972 / ATCC 24843) (Fission yeast).